A 300-amino-acid polypeptide reads, in one-letter code: Lysenin-related protein 1 (300 aa).

Residues 12–35 form an N-terminal cap domain region; sequence EEIEVDVVSVWKEGYAYENRGNSS. Residues 36-109 form a beta-hairpin domain region; sequence VQQKITMTKG…SQVIEHTVTI (74 aa). An N-terminal cap domain region spans residues 110–158; sequence PPNKKFTRWKLNADVGGTGIEYMYLIDEVTAIGADLTIPEVNKSRAKIL. Positions 159–299 are C-terminal receptor-binding domain; sequence VGRQIHLGET…EDKWILEVVN (141 aa). An N-(acyl)-sphingosylphosphocholine contacts are provided by Lys187, Ser229, Tyr235, and Tyr284. An intrachain disulfide couples Cys274 to Cys285.

It belongs to the lysenin family. As to quaternary structure, binds to sphingomyelin as a monomer by using its C-terminal domain. Forms a nonamer when sphingomyelin/LRP-1 ratio is lower than ca 500. Oligomerization, but not binding, is influenced by the fluidity of sphingomyelin. In terms of tissue distribution, expressed by coelomocytes.

The protein resides in the secreted. The protein localises to the target cell membrane. Its function is as follows. Pore-forming toxin that specifically binds sphingomyelin in the plasma membrane of various cells. Has hemolytic activity. Binding and hemolytic activities of this toxin are 10 times less than those of lysenin and lysenin-related protein 2. This chain is Lysenin-related protein 1, found in Eisenia fetida (Red wiggler worm).